We begin with the raw amino-acid sequence, 1199 residues long: Chromatin structure-remodeling complex subunit snf21 (1199 aa).

Positions 256–328 constitute an HSA domain; it reads QRSDRERRLK…AKQRLQALKE (73 aa). The region spanning 429–594 is the Helicase ATP-binding domain; sequence ISLYNNHLNG…WALLNFVLPR (166 aa). 442-449 contributes to the ATP binding site; it reads DEMGLGKT. The DEGH box motif lies at 544–547; sequence DEGH. One can recognise a Helicase C-terminal domain in the interval 740 to 903; it reads LLDRILPKLF…STPEEREAFL (164 aa). The tract at residues 1017 to 1059 is disordered; it reads MESEARPTRGRPKRNIASVDETPALTLNGKPKKKRGPAPDTLT. In terms of domain architecture, Bromo spans 1061 to 1171; it reads EHRSLLRRVC…TAMETKIEEL (111 aa).

The protein belongs to the SNF2/RAD54 helicase family. Component of the RSC complex composed of at least arp9, arp42, rsc1, rsc4, rsc7, rsc9, rsc58, sfh1, snf21, ssr1, ssr2, ssr3 and ssr4. The complex interacts with histone and histone variant components of centromeric chromatin.

Its subcellular location is the nucleus. Functionally, helicase. Component of the chromatin structure remodeling complex (RSC), which is involved in transcription regulation and nucleosome positioning. Controls particularly membrane and organelle development genes. This chain is Chromatin structure-remodeling complex subunit snf21 (snf21), found in Schizosaccharomyces pombe (strain 972 / ATCC 24843) (Fission yeast).